The following is a 319-amino-acid chain: ATP-dependent 6-phosphofructokinase (319 aa).

ATP-binding positions include glycine 11, 72–73 (RS), and 102–105 (GDGS). Aspartate 103 contacts Mg(2+). 126 to 128 (TID) contributes to the substrate binding site. Residue aspartate 128 is the Proton acceptor of the active site. Residue arginine 155 participates in ADP binding. Substrate-binding positions include arginine 163 and 170–172 (MGR). 186–188 (GAE) is a binding site for ADP. Substrate is bound by residues glutamate 223, arginine 245, and 251 to 254 (HTQR).

This sequence belongs to the phosphofructokinase type A (PFKA) family. ATP-dependent PFK group I subfamily. Prokaryotic clade 'B1' sub-subfamily. As to quaternary structure, homotetramer. Mg(2+) serves as cofactor.

It localises to the cytoplasm. The catalysed reaction is beta-D-fructose 6-phosphate + ATP = beta-D-fructose 1,6-bisphosphate + ADP + H(+). The protein operates within carbohydrate degradation; glycolysis; D-glyceraldehyde 3-phosphate and glycerone phosphate from D-glucose: step 3/4. Its activity is regulated as follows. Allosterically activated by ADP and other diphosphonucleosides, and allosterically inhibited by phosphoenolpyruvate. Its function is as follows. Catalyzes the phosphorylation of D-fructose 6-phosphate to fructose 1,6-bisphosphate by ATP, the first committing step of glycolysis. The chain is ATP-dependent 6-phosphofructokinase from Sulfurimonas denitrificans (strain ATCC 33889 / DSM 1251) (Thiomicrospira denitrificans (strain ATCC 33889 / DSM 1251)).